The chain runs to 155 residues: Interleukin-2 (155 aa).

The first 20 residues, 1–20 (MYSMQLASCVALTLVLLVNS), serve as a signal peptide directing secretion. Thr23 is a glycosylation site (O-linked (GalNAc...) threonine). Cysteines 78 and 126 form a disulfide.

The protein belongs to the IL-2 family.

The protein resides in the secreted. Its function is as follows. Cytokine produced by activated CD4-positive helper T-cells and to a lesser extend activated CD8-positive T-cells and natural killer (NK) cells that plays pivotal roles in the immune response and tolerance. Binds to a receptor complex composed of either the high-affinity trimeric IL-2R (IL2RA/CD25, IL2RB/CD122 and IL2RG/CD132) or the low-affinity dimeric IL-2R (IL2RB and IL2RG). Interaction with the receptor leads to oligomerization and conformation changes in the IL-2R subunits resulting in downstream signaling starting with phosphorylation of JAK1 and JAK3. In turn, JAK1 and JAK3 phosphorylate the receptor to form a docking site leading to the phosphorylation of several substrates including STAT5. This process leads to activation of several pathways including STAT, phosphoinositide-3-kinase/PI3K and mitogen-activated protein kinase/MAPK pathways. Functions as a T-cell growth factor and can increase NK-cell cytolytic activity as well. Promotes strong proliferation of activated B-cells and subsequently immunoglobulin production. Plays a pivotal role in regulating the adaptive immune system by controlling the survival and proliferation of regulatory T-cells, which are required for the maintenance of immune tolerance. Moreover, participates in the differentiation and homeostasis of effector T-cell subsets, including Th1, Th2, Th17 as well as memory CD8-positive T-cells. In Rattus norvegicus (Rat), this protein is Interleukin-2 (Il2).